The primary structure comprises 385 residues: FK506-binding protein 5 (385 aa).

A PPIase FKBP-type domain is found at 26–115; sequence TNFVSVHYDA…RFEVELIGFW (90 aa). TPR repeat units follow at residues 128–161, 177–210, and 211–244; these read AEKK…IQDL, VSIQ…DMTK, and IKAY…AIGL.

It catalyses the reaction [protein]-peptidylproline (omega=180) = [protein]-peptidylproline (omega=0). Its activity is regulated as follows. Inhibited by both FK506 and rapamycin. PPIases accelerate the folding of proteins. It catalyzes the cis-trans isomerization of proline imidic peptide bonds in oligopeptides. In Rhizopus delemar (strain RA 99-880 / ATCC MYA-4621 / FGSC 9543 / NRRL 43880) (Mucormycosis agent), this protein is FK506-binding protein 5 (FKBP5).